Consider the following 95-residue polypeptide: Beta-alanine degradation protein BauB (95 aa).

Residues 23-90 (WRFAPGAETG…NASAHEVVFV (68 aa)) enclose the Cupin type-2 domain.

Its function is as follows. Involved in the degradation of beta-alanine. The chain is Beta-alanine degradation protein BauB (bauB) from Pseudomonas aeruginosa (strain ATCC 15692 / DSM 22644 / CIP 104116 / JCM 14847 / LMG 12228 / 1C / PRS 101 / PAO1).